The primary structure comprises 596 residues: Pentatricopeptide repeat-containing protein At1g50270 (596 aa).

PPR repeat units follow at residues 66-102 (SIQL…GVIP), 103-136 (SRHT…GLDS), 137-167 (DPFV…AEDK), 168-202 (DVVT…GVAA), 203-237 (NEMT…GRVK), 239-269 (DVFI…MPSR), 270-304 (NVVT…DVAP), 305-339 (NEKT…SIEI), 340-370 (NTTA…LHEK), 371-405 (NVYT…HVSP), 406-436 (NEVT…MKGR), and 442-472 (KADH…MPME). Residues 477–552 (VWGALFGSCL…SPGFSWIEVK (76 aa)) form a type E motif region. Residues 553-584 (GKLCEFIAFDDKKPLESDDLYKTLDTVGVQMR) are type E(+) motif.

Belongs to the PPR family. PCMP-E subfamily.

The polypeptide is Pentatricopeptide repeat-containing protein At1g50270 (PCMP-E42) (Arabidopsis thaliana (Mouse-ear cress)).